The following is a 481-amino-acid chain: F-box/FBD/LRR-repeat protein At5g18770 (481 aa).

The F-box domain occupies 23–69 (EDMISALPDHLLCHILIFLSTDESVLTSVLSSRWRNLWKWVPRLDLN). LRR repeat units lie at residues 126–153 (KPNV…TLSA), 159–185 (CLKL…YLED), 186–211 (VVFP…KLSL), 214–234 (DDVV…TLKR), 236–261 (VPVY…SLID), 289–314 (DELS…TISW), and 340–368 (ATMS…HFTL). An FBD domain is found at 378-430 (VITGFSRVLPRCLVFSLESVEMESPITEKATELKLVRYFLENSATLKKLVLLL).

This chain is F-box/FBD/LRR-repeat protein At5g18770, found in Arabidopsis thaliana (Mouse-ear cress).